Consider the following 862-residue polypeptide: Probable alpha,alpha-trehalose-phosphate synthase [UDP-forming] 11 (862 aa).

At Ser5 the chain carries Phosphoserine. Residues 50–538 (PKRIVVSNQL…ARSYDQDLQR (489 aa)) form a glycosyltransferase region. Residues 838-862 (SKHEQQKKQSKFTFQQPMGQCRKKA) form a disordered region.

This sequence in the N-terminal section; belongs to the glycosyltransferase 20 family. The protein in the C-terminal section; belongs to the trehalose phosphatase family. As to expression, expressed in leaves, roots, stems and flowers.

The enzyme catalyses D-glucose 6-phosphate + UDP-alpha-D-glucose = alpha,alpha-trehalose 6-phosphate + UDP + H(+). The polypeptide is Probable alpha,alpha-trehalose-phosphate synthase [UDP-forming] 11 (TPS11) (Arabidopsis thaliana (Mouse-ear cress)).